We begin with the raw amino-acid sequence, 266 residues long: Small ribosomal subunit protein mS42 (266 aa).

This sequence belongs to the mitochondrion-specific ribosomal protein mS42 family. Component of the mitochondrial small ribosomal subunit (mt-SSU). Mature yeast 74S mitochondrial ribosomes consist of a small (37S) and a large (54S) subunit. The 37S small subunit contains a 15S ribosomal RNA (15S mt-rRNA) and 34 different proteins. The 54S large subunit contains a 21S rRNA (21S mt-rRNA) and 46 different proteins. mS42 forms a heterodimer with mS43, building a large protuberance adjacent to the mRNA channel exit in the mt-SSU body.

It is found in the mitochondrion. Component of the mitochondrial ribosome (mitoribosome), a dedicated translation machinery responsible for the synthesis of mitochondrial genome-encoded proteins, including at least some of the essential transmembrane subunits of the mitochondrial respiratory chain. The mitoribosomes are attached to the mitochondrial inner membrane and translation products are cotranslationally integrated into the membrane. This chain is Small ribosomal subunit protein mS42 (RSM26), found in Saccharomyces cerevisiae (strain ATCC 204508 / S288c) (Baker's yeast).